Consider the following 349-residue polypeptide: Decapping nuclease RAI1 (349 aa).

Residue E157 participates in a divalent metal cation binding. E205 serves as a coordination point for substrate. 3 residues coordinate a divalent metal cation: D207, E222, and L223. The substrate site is built by K224 and Q248.

The protein belongs to the DXO/Dom3Z family. As to quaternary structure, interacts with RAT1; the interaction is direct, stabilizes RAT1 protein structure and stimulates its exoribonuclease activity. The interaction also stimulates RAI1 pyrophosphohydrolase activity, probably by recruiting it to mRNA substrates. Requires a divalent metal cation as cofactor.

It localises to the nucleus. It catalyses the reaction a 5'-end NAD(+)-phospho-ribonucleoside in mRNA + H2O = a 5'-end phospho-ribonucleoside in mRNA + NAD(+) + H(+). The enzyme catalyses a 5'-end (N(7)-methyl 5'-triphosphoguanosine)-ribonucleoside-ribonucleotide in mRNA + H2O = a (N(7)-methyl 5'-triphosphoguanosine)-nucleoside + a 5'-end phospho-ribonucleoside in mRNA + H(+). It carries out the reaction a 5'-end triphospho-ribonucleoside in mRNA + H2O = a 5'-end phospho-ribonucleoside in mRNA + diphosphate + H(+). Its function is as follows. Decapping enzyme for NAD-capped RNAs: specifically hydrolyzes the nicotinamide adenine dinucleotide (NAD) cap from a subset of RNAs by removing the entire NAD moiety from the 5'-end of an NAD-capped RNA. The NAD-cap is present at the 5'-end of some RNAs and snoRNAs. In contrast to the canonical 5'-end N7 methylguanosine (m7G) cap, the NAD cap promotes mRNA decay. Also acts as a non-canonical decapping enzyme that removes the entire cap structure of m7G capped or incompletely capped RNAs. Has decapping activity toward incomplete 5'-end m7G cap mRNAs such as unmethylated 5'-end-capped RNA (cap0), while it has no activity toward 2'-O-ribose methylated m7G cap (cap1). Also possesses RNA 5'-pyrophosphohydrolase activity by hydrolyzing the 5'-end triphosphate to release pyrophosphates. Stimulates exoribonuclease activity of Rat1, allowing it to degrade RNAs with stable secondary structure more effectively. This Yarrowia lipolytica (strain CLIB 122 / E 150) (Yeast) protein is Decapping nuclease RAI1 (RAI1).